We begin with the raw amino-acid sequence, 290 residues long: Probable 2-(5''-triphosphoribosyl)-3'-dephosphocoenzyme-A synthase (290 aa).

Belongs to the CitG/MdcB family.

The enzyme catalyses 3'-dephospho-CoA + ATP = 2'-(5''-triphospho-alpha-D-ribosyl)-3'-dephospho-CoA + adenine. Its function is as follows. Involved in the formation of 2-(5''-phosphoribosyl)-3'-dephosphocoenzyme-A, the prosthetic group of the acyl-carrier protein of the malonate decarboxylase. The chain is Probable 2-(5''-triphosphoribosyl)-3'-dephosphocoenzyme-A synthase from Pseudomonas fluorescens (strain Pf0-1).